The primary structure comprises 294 residues: Bifunctional protein FolD (294 aa).

Residues 169 to 171, Thr-196, and Val-237 contribute to the NADP(+) site; that span reads GRG.

The protein belongs to the tetrahydrofolate dehydrogenase/cyclohydrolase family. In terms of assembly, homodimer.

It catalyses the reaction (6R)-5,10-methylene-5,6,7,8-tetrahydrofolate + NADP(+) = (6R)-5,10-methenyltetrahydrofolate + NADPH. It carries out the reaction (6R)-5,10-methenyltetrahydrofolate + H2O = (6R)-10-formyltetrahydrofolate + H(+). It participates in one-carbon metabolism; tetrahydrofolate interconversion. In terms of biological role, catalyzes the oxidation of 5,10-methylenetetrahydrofolate to 5,10-methenyltetrahydrofolate and then the hydrolysis of 5,10-methenyltetrahydrofolate to 10-formyltetrahydrofolate. This chain is Bifunctional protein FolD, found in Renibacterium salmoninarum (strain ATCC 33209 / DSM 20767 / JCM 11484 / NBRC 15589 / NCIMB 2235).